Consider the following 102-residue polypeptide: Large ribosomal subunit protein bL21 (102 aa).

This sequence belongs to the bacterial ribosomal protein bL21 family. As to quaternary structure, part of the 50S ribosomal subunit. Contacts protein L20.

This protein binds to 23S rRNA in the presence of protein L20. This is Large ribosomal subunit protein bL21 from Limosilactobacillus fermentum (strain NBRC 3956 / LMG 18251) (Lactobacillus fermentum).